The sequence spans 93 residues: Large ribosomal subunit protein uL23 (93 aa).

It belongs to the universal ribosomal protein uL23 family. Part of the 50S ribosomal subunit. Contacts protein L29, and trigger factor when it is bound to the ribosome.

Functionally, one of the early assembly proteins it binds 23S rRNA. One of the proteins that surrounds the polypeptide exit tunnel on the outside of the ribosome. Forms the main docking site for trigger factor binding to the ribosome. In Campylobacter fetus subsp. fetus (strain 82-40), this protein is Large ribosomal subunit protein uL23.